A 361-amino-acid chain; its full sequence is MKNLFLFCRAGFEKECAAEIQQRAGELNVGGFVKANNNDAYVVYQCFEDDAADTLVKQLPLDSLIFARQMFAASDLLVDLPENDRISPIVAALSDVSKAGEVRVETPDTNEAKELSAFCRKFTVPLRQHLKKSGSLLAQENPKRPIIHVCFIGPGRAYVGYSYSNNSSPHFMGIPRLKMAADAPSRSSLKLDEAFGQFVPKEEQEERIRSGMNSVDLGACPGGWTYQLVRRGMFVSAVDNGPMDEKLMETGQVKHYREDGFRFEPQRKNIYWLVCDMVEKPARVAELIEAWAINGWFKEAIFNLKLPMKSRYKEVTAILETMQTILKENGVSDFKVQCKHLYHDRDEVTVHLWLRPNTAWN.

S-adenosyl-L-methionine-binding positions include Ser187, 220–223 (CPGG), Asp239, Asp259, and Asp276. Lys305 serves as the catalytic Proton acceptor.

This sequence belongs to the class I-like SAM-binding methyltransferase superfamily. RNA methyltransferase RlmE family. RlmM subfamily. Monomer.

It is found in the cytoplasm. The enzyme catalyses cytidine(2498) in 23S rRNA + S-adenosyl-L-methionine = 2'-O-methylcytidine(2498) in 23S rRNA + S-adenosyl-L-homocysteine + H(+). Catalyzes the 2'-O-methylation at nucleotide C2498 in 23S rRNA. This Shewanella baltica (strain OS185) protein is Ribosomal RNA large subunit methyltransferase M.